The following is a 135-amino-acid chain: Small ribosomal subunit protein uS12c (135 aa).

This sequence belongs to the universal ribosomal protein uS12 family. Part of the 30S ribosomal subunit.

The protein resides in the plastid. The protein localises to the chloroplast. With S4 and S5 plays an important role in translational accuracy. Located at the interface of the 30S and 50S subunits. The chain is Small ribosomal subunit protein uS12c (rps12) from Adiantum capillus-veneris (Maidenhair fern).